Here is a 115-residue protein sequence, read N- to C-terminus: Large ribosomal subunit protein bL20c (115 aa).

The protein belongs to the bacterial ribosomal protein bL20 family.

It is found in the plastid. Its subcellular location is the chloroplast. In terms of biological role, binds directly to 23S ribosomal RNA and is necessary for the in vitro assembly process of the 50S ribosomal subunit. It is not involved in the protein synthesizing functions of that subunit. In Physcomitrium patens (Spreading-leaved earth moss), this protein is Large ribosomal subunit protein bL20c.